Here is a 342-residue protein sequence, read N- to C-terminus: Oxygen-dependent coproporphyrinogen-III oxidase (342 aa).

S98 lines the substrate pocket. 2 residues coordinate a divalent metal cation: H102 and H112. The active-site Proton donor is H112. 114 to 116 (NYR) is a substrate binding site. A divalent metal cation contacts are provided by H146 and H176. The segment at 266–301 (YVEFNLVWDRGTIFGLQTNGRTESILMSLPPLARWE) is important for dimerization.

Belongs to the aerobic coproporphyrinogen-III oxidase family. In terms of assembly, homodimer. Requires a divalent metal cation as cofactor.

It localises to the cytoplasm. It catalyses the reaction coproporphyrinogen III + O2 + 2 H(+) = protoporphyrinogen IX + 2 CO2 + 2 H2O. Its pathway is porphyrin-containing compound metabolism; protoporphyrin-IX biosynthesis; protoporphyrinogen-IX from coproporphyrinogen-III (O2 route): step 1/1. Involved in the heme and chlorophyll biosynthesis. Catalyzes the aerobic oxidative decarboxylation of propionate groups of rings A and B of coproporphyrinogen-III to yield the vinyl groups in protoporphyrinogen-IX. This chain is Oxygen-dependent coproporphyrinogen-III oxidase, found in Prochlorococcus marinus subsp. pastoris (strain CCMP1986 / NIES-2087 / MED4).